The sequence spans 244 residues: Osmotin-like protein OSM34 (244 aa).

A signal peptide spans 1-22 (MANLLVSTFIFSALLLISTATA). 8 cysteine pairs are disulfide-bonded: Cys31/Cys222, Cys72/Cys82, Cys87/Cys93, Cys138/Cys212, Cys143/Cys195, Cys151/Cys161, Cys165/Cys174, and Cys175/Cys182.

Belongs to the thaumatin family.

This is Osmotin-like protein OSM34 (OSM34) from Arabidopsis thaliana (Mouse-ear cress).